We begin with the raw amino-acid sequence, 22 residues long: Caerin-3.5 (22 aa).

At lysine 22 the chain carries Lysine amide.

Expressed by the skin dorsal glands.

Its subcellular location is the secreted. Its function is as follows. Shows significant activity against Gram-positive organisms, but is less effective against Gram-negative organisms. In Ranoidea gracilenta (Dainty green tree frog), this protein is Caerin-3.5.